The chain runs to 167 residues: Small heat shock protein C1 (167 aa).

The sHSP domain occupies 59–167 (PFYESNSIKS…EQDAKEIPIN (109 aa)).

Belongs to the small heat shock protein (HSP20) family.

This Rickettsia bellii (strain RML369-C) protein is Small heat shock protein C1 (hspC1).